The following is a 729-amino-acid chain: Polyphosphate kinase (729 aa).

The tract at residues 1 to 46 (MTEAQTRTEPSESSESSEAVAPAITSAADSAPEAPPATTAPAIENP) is disordered. Over residues 25–42 (TSAADSAPEAPPATTAPA) the composition is skewed to low complexity. Residue N90 coordinates ATP. Mg(2+) contacts are provided by R422 and R452. H482 acts as the Phosphohistidine intermediate in catalysis. Y515, R611, and H639 together coordinate ATP.

Belongs to the polyphosphate kinase 1 (PPK1) family. It depends on Mg(2+) as a cofactor. Post-translationally, an intermediate of this reaction is the autophosphorylated ppk in which a phosphate is covalently linked to a histidine residue through a N-P bond.

It catalyses the reaction [phosphate](n) + ATP = [phosphate](n+1) + ADP. In terms of biological role, catalyzes the reversible transfer of the terminal phosphate of ATP to form a long-chain polyphosphate (polyP). The protein is Polyphosphate kinase of Mycolicibacterium gilvum (strain PYR-GCK) (Mycobacterium gilvum (strain PYR-GCK)).